A 448-amino-acid chain; its full sequence is Exodeoxyribonuclease 7 large subunit (448 aa).

The protein belongs to the XseA family. In terms of assembly, heterooligomer composed of large and small subunits.

It is found in the cytoplasm. The catalysed reaction is Exonucleolytic cleavage in either 5'- to 3'- or 3'- to 5'-direction to yield nucleoside 5'-phosphates.. Bidirectionally degrades single-stranded DNA into large acid-insoluble oligonucleotides, which are then degraded further into small acid-soluble oligonucleotides. In Shewanella baltica (strain OS223), this protein is Exodeoxyribonuclease 7 large subunit.